The chain runs to 457 residues: Adenylosuccinate synthetase (457 aa).

GTP-binding positions include 45-51 (GDEGKGK) and 73-75 (GHT). Asp-46 acts as the Proton acceptor in catalysis. Mg(2+) contacts are provided by Asp-46 and Gly-73. IMP-binding positions include 46 to 49 (DEGK), 71 to 74 (NAGH), Thr-163, Arg-177, Asn-255, Thr-270, and Arg-334. His-74 serves as the catalytic Proton donor. 330–336 (VTTKRVR) contacts substrate. Residues Arg-336, 362 to 364 (KLD), and 444 to 446 (GVG) contribute to the GTP site.

The protein belongs to the adenylosuccinate synthetase family. Homodimer. Mg(2+) is required as a cofactor.

It localises to the cytoplasm. The catalysed reaction is IMP + L-aspartate + GTP = N(6)-(1,2-dicarboxyethyl)-AMP + GDP + phosphate + 2 H(+). Its pathway is purine metabolism; AMP biosynthesis via de novo pathway; AMP from IMP: step 1/2. Its function is as follows. Plays an important role in the de novo pathway and in the salvage pathway of purine nucleotide biosynthesis. Catalyzes the first committed step in the biosynthesis of AMP from IMP. This chain is Adenylosuccinate synthetase, found in Aedes aegypti (Yellowfever mosquito).